The following is a 245-amino-acid chain: 4-hydroxy-tetrahydrodipicolinate reductase (245 aa).

NAD(+) contacts are provided by residues 7-12, 75-77, and 102-105; these read GAKGKV, GTT, and APNF. Catalysis depends on histidine 132, which acts as the Proton donor/acceptor. Histidine 133 contacts (S)-2,3,4,5-tetrahydrodipicolinate. Residue lysine 136 is the Proton donor of the active site. Residue 142-143 participates in (S)-2,3,4,5-tetrahydrodipicolinate binding; that stretch reads GT.

Belongs to the DapB family.

Its subcellular location is the cytoplasm. The catalysed reaction is (S)-2,3,4,5-tetrahydrodipicolinate + NAD(+) + H2O = (2S,4S)-4-hydroxy-2,3,4,5-tetrahydrodipicolinate + NADH + H(+). It carries out the reaction (S)-2,3,4,5-tetrahydrodipicolinate + NADP(+) + H2O = (2S,4S)-4-hydroxy-2,3,4,5-tetrahydrodipicolinate + NADPH + H(+). It participates in amino-acid biosynthesis; L-lysine biosynthesis via DAP pathway; (S)-tetrahydrodipicolinate from L-aspartate: step 4/4. In terms of biological role, catalyzes the conversion of 4-hydroxy-tetrahydrodipicolinate (HTPA) to tetrahydrodipicolinate. This is 4-hydroxy-tetrahydrodipicolinate reductase from Mycobacterium sp. (strain KMS).